An 819-amino-acid polypeptide reads, in one-letter code: Mitosis inhibitor protein kinase SWE1 (819 aa).

A Phosphoserine; by CDC5 modification is found at serine 36. Threonine 45 carries the phosphothreonine; by CDC28 modification. Residues serine 56 and serine 63 each carry the phosphoserine; by CDC28 modification. Phosphoserine is present on serine 70. Position 74 is a phosphothreonine; by CDC28 (threonine 74). The interval 86-105 (KIEEEEEEEEEGKDEESVDS) is disordered. Acidic residues predominate over residues 88-102 (EEEEEEEEEGKDEES). Serine 102 is subject to Phosphoserine; by CDC5. A Phosphoserine; by CDC28 modification is found at serine 105. Serine 111 carries the phosphoserine; by CDC5, CDC28 and CLA4 modification. The interval 117–168 (ESVTTPITKRSAEKTNSPISLKQWNQRWFPKNDARTENTSSSSSYSVAKPNQ) is disordered. Phosphoserine; by CDC5 is present on serine 118. Positions 118 to 142 (SVTTPITKRSAEKTNSPISLKQWNQ) are enriched in polar residues. 2 positions are modified to phosphothreonine; by CDC28: threonine 121 and threonine 124. At serine 127 the chain carries Phosphoserine; by CDC28. Phosphothreonine; by CDC5 is present on threonine 131. Serine 133 carries the post-translational modification Phosphoserine; by CDC28. At serine 136 the chain carries Phosphoserine; by CDC28 and CLA4. Residues serine 156 and serine 169 each carry the phosphoserine; by CDC5 modification. A Phosphothreonine; by CDC28 modification is found at threonine 196. Serine 201 carries the phosphoserine; by CDC28 modification. Phosphoserine; by CDC5 is present on residues serine 225 and serine 254. At serine 262 the chain carries Phosphoserine. Phosphoserine; by CDC28 occurs at positions 263 and 266. The interval 278–297 (NQTNILSPTNSLVTNSSPQT) is disordered. The residue at position 280 (threonine 280) is a Phosphothreonine; by CDC5. 2 positions are modified to phosphoserine: serine 284 and serine 294. At serine 312 the chain carries Phosphoserine; by CLA4. Residues 341–395 (PIIISSHHSTRKNPQPYQFRGRYDNDTDEEISTPTRRKSIIGATSQTHRESRPLS) form a disordered region. Phosphoserine is present on serine 345. 2 positions are modified to phosphothreonine; by CDC28: threonine 367 and threonine 373. At serine 379 the chain carries Phosphoserine; by CDC5 and CLA4. Position 384 is a phosphothreonine; by CDC28 (threonine 384). Phosphoserine; by CDC5 and CLA4 is present on residues serine 395 and serine 438. A Protein kinase domain is found at 444–794 (FTNVHSIGKG…NQILQTEECL (351 aa)). ATP-binding positions include 450–458 (IGKGQFSTV) and lysine 473. Residue aspartate 579 is the Proton acceptor of the active site. Asparagine 584 and aspartate 597 together coordinate Mg(2+). A Phosphoserine; by CDC5 modification is found at serine 610. The residue at position 629 (threonine 629) is a Phosphothreonine; by CDC5. The residue at position 688 (threonine 688) is a Phosphothreonine; by CDC5 and CLA4. Threonine 692 carries the post-translational modification Phosphothreonine. Residues 707–716 (SNNAGTSTVH) are compositionally biased toward polar residues. The disordered stretch occupies residues 707–736 (SNNAGTSTVHNNSNINNPNMNNGNDNNNVN). A compositionally biased stretch (low complexity) spans 717–736 (NNSNINNPNMNNGNDNNNVN). Lysine 741 is covalently cross-linked (Glycyl lysine isopeptide (Lys-Gly) (interchain with G-Cter in ubiquitin)).

Belongs to the protein kinase superfamily. Ser/Thr protein kinase family. WEE1 subfamily. Interacts with CLB2-CDC28. Partial hyperphosphorylation of SWE1 by CLB2-CDC28 stabilizes the ternary complex of SWE1 and CLB2-CDC28 and stimulates kinase activity of SWE1 in a positive feedback loop, maintaining CLB2-CDC28 in the tyrosine-phosphorylated state. Fully hyperphosphorylated SWE1 dissociates from CLB2-CDC28. Interacts with HSL7, KCC4 and MET30. Ubiquitinated by the SCF(MET30) complex, leading to its degradation by the proteasome. In terms of processing, phosphorylated progressively by CLA4, CLB2-CDC28 and CDC5. CLA4-dependent phosphorylation occurs in late S phase, followed by phosphorylation by CLB2-CDC28 in early G2, when the levels of mitotic CLB2 increases. This phosphorylation is critical for triggering subsequent SWE1-CDC5 interaction and CDC5-dependent phosphorylation. The resulting cumulative hyperphosphorylation down-regulates SWE1 by targeting it for ubiquitin-mediated degradation. This stepwise phosphorylation is thought to be a mechanism to integrate the different checkpoint requirements before entry into mitosis.

It localises to the bud neck. The protein localises to the nucleus. The catalysed reaction is L-seryl-[protein] + ATP = O-phospho-L-seryl-[protein] + ADP + H(+). It carries out the reaction L-threonyl-[protein] + ATP = O-phospho-L-threonyl-[protein] + ADP + H(+). Its function is as follows. Protein kinase that acts as a negative regulator of entry into mitosis (G2 to M transition) by phosphorylating and inhibiting the mitosis-promoting cyclin B-bound CDC28 at 'Tyr-19'. SWE1-mediated inhibition of CDC28 acts in a cell size or morphogenesis checkpoint to delay mitosis in response to defects in growth, actin organization or bud formation. Inhibits the activity of B-type cyclins in replication initiation strongly for CLB2, moderately for CLB3 and CLB4, and there is no apparent inhibition for CLB5 and CLB6, correlating with the normal expression timing of those cyclins. Hyperphosphorylation and degradation of SWE1 when all checkpoint requirement are met releases CLB2-CDC28 from inhibition and allows for progression through the cell cycle. SWE1-dependent CDC28 phosphorylation is also required for pachytene arrest upon activation of the recombination checkpoint during meiosis. Also involved in the regulation of nitrogen starvation- and short chain alcohol-induced filamentous growth, or filamentous differentiation in response to slowed DNA synthesis. Can act both on serines and on tyrosines. In Saccharomyces cerevisiae (strain ATCC 204508 / S288c) (Baker's yeast), this protein is Mitosis inhibitor protein kinase SWE1 (SWE1).